We begin with the raw amino-acid sequence, 94 residues long: Large ribosomal subunit protein eL42 (94 aa).

Residues Cys11, Cys14, Cys71, and Cys74 each contribute to the Zn(2+) site. The segment at 11–74 (CPFCKRHTIH…LDLRFRCTVC (64 aa)) adopts a C4-type zinc-finger fold.

Belongs to the eukaryotic ribosomal protein eL42 family. In terms of assembly, part of the 50S ribosomal subunit. Zn(2+) serves as cofactor.

Functionally, binds to the 23S rRNA. This Pyrococcus abyssi (strain GE5 / Orsay) protein is Large ribosomal subunit protein eL42.